A 178-amino-acid chain; its full sequence is Protein GrpE (178 aa).

Basic and acidic residues predominate over residues 1–11; sequence MAEDQAPREET. A disordered region spans residues 1-30; the sequence is MAEDQAPREETVEAPELTEAPEIDELETLR.

It belongs to the GrpE family. In terms of assembly, homodimer.

The protein localises to the cytoplasm. In terms of biological role, participates actively in the response to hyperosmotic and heat shock by preventing the aggregation of stress-denatured proteins, in association with DnaK and GrpE. It is the nucleotide exchange factor for DnaK and may function as a thermosensor. Unfolded proteins bind initially to DnaJ; upon interaction with the DnaJ-bound protein, DnaK hydrolyzes its bound ATP, resulting in the formation of a stable complex. GrpE releases ADP from DnaK; ATP binding to DnaK triggers the release of the substrate protein, thus completing the reaction cycle. Several rounds of ATP-dependent interactions between DnaJ, DnaK and GrpE are required for fully efficient folding. The chain is Protein GrpE from Cereibacter sphaeroides (strain ATCC 17023 / DSM 158 / JCM 6121 / CCUG 31486 / LMG 2827 / NBRC 12203 / NCIMB 8253 / ATH 2.4.1.) (Rhodobacter sphaeroides).